Consider the following 106-residue polypeptide: Adipokinetic hormone/corazonin-related peptide (106 aa).

The first 25 residues, 1–25 (MRNSIYKLIMFAVLCMVLTSSLSYA), serve as a signal peptide directing secretion. A Pyrrolidone carboxylic acid modification is found at Gln26. The residue at position 35 (Ala35) is an Alanine amide. The propeptide occupies 39–106 (SLAEAAQSTG…GLPLFSNGHL (68 aa)).

The protein belongs to the AKH/HRTH/RPCH family. As to expression, only expressed in the head and thorax body segments of adults. Is more expressed in adult males than in females.

The protein resides in the secreted. Functionally, neuropeptide with neuromodulator or neurotransmitter role that activates the adipokinetic hormone/corazonin-related peptide receptor (ACPR). May function in regulation of post-ecdysis activities. Does not activate the A.gambiae adipokinetic hormone (AKH) and corazonin (CRZ) receptors. This chain is Adipokinetic hormone/corazonin-related peptide, found in Aedes aegypti (Yellowfever mosquito).